A 506-amino-acid polypeptide reads, in one-letter code: MEAALVILDGWGLGDGDETDAVAAADTPAFDALAERGATGQLETHGRSVGLPDGQMGNSEVGHLNIGAGRVVKQDSTRVTDDIDAGVFADNEALARAFDHADDHDGRVHFMGLVSDGGVHSYQSHLHALVDLAAERGVEAVTHAFTDGRDTAPKSGVGFIEDLAATVEEAGTGDVATVCGRYYAMDRDENWERTKRAYDAIVHREAPHEADSAVAAVAASYDRGDTDEYVEPTLVSGTDAPLSADDAVVFFNFRADRARQLVRMLADIDPDWAFETDPPAAALVTMTEYDETFDLPVAYPPLAPEQPLGAVLAESDRTQLRMAESEKYAHVTYFLNGGREVAFEGERRDIVDSPDVPTYDEQPAMSAPELTDAAIDHIGADAPDVLVLNYANPDMVGHTGDFEAAKAAIEAVDEQLGRLESAIREAGGHLFVTADHGNADDMGTPEAPHTAHTTNPVPFVYCTPDGTDGGYTVRDGGTLADIAPTLLSTIGVDIPETMTGESLLER.

2 residues coordinate Mn(2+): aspartate 9 and serine 59. Residue serine 59 is the Phosphoserine intermediate of the active site. Substrate is bound by residues histidine 120, 149-150 (RD), arginine 181, arginine 187, 254-257 (RADR), and lysine 327. Aspartate 394, histidine 398, aspartate 435, histidine 436, and histidine 452 together coordinate Mn(2+).

It belongs to the BPG-independent phosphoglycerate mutase family. Mn(2+) is required as a cofactor.

It catalyses the reaction (2R)-2-phosphoglycerate = (2R)-3-phosphoglycerate. It participates in carbohydrate degradation; glycolysis; pyruvate from D-glyceraldehyde 3-phosphate: step 3/5. In terms of biological role, catalyzes the interconversion of 2-phosphoglycerate and 3-phosphoglycerate. The polypeptide is 2,3-bisphosphoglycerate-independent phosphoglycerate mutase (Natronomonas pharaonis (strain ATCC 35678 / DSM 2160 / CIP 103997 / JCM 8858 / NBRC 14720 / NCIMB 2260 / Gabara) (Halobacterium pharaonis)).